We begin with the raw amino-acid sequence, 239 residues long: 3-dehydroquinate dehydratase (239 aa).

3-dehydroquinate contacts are provided by residues 35–37 (ELR) and Arg-70. His-133 acts as the Proton donor/acceptor in catalysis. Lys-160 (schiff-base intermediate with substrate) is an active-site residue. 3-dehydroquinate contacts are provided by Arg-202 and Gln-225.

Belongs to the type-I 3-dehydroquinase family. Homodimer.

The catalysed reaction is 3-dehydroquinate = 3-dehydroshikimate + H2O. Its pathway is metabolic intermediate biosynthesis; chorismate biosynthesis; chorismate from D-erythrose 4-phosphate and phosphoenolpyruvate: step 3/7. In terms of biological role, involved in the third step of the chorismate pathway, which leads to the biosynthesis of aromatic amino acids. Catalyzes the cis-dehydration of 3-dehydroquinate (DHQ) and introduces the first double bond of the aromatic ring to yield 3-dehydroshikimate. The chain is 3-dehydroquinate dehydratase from Staphylococcus saprophyticus subsp. saprophyticus (strain ATCC 15305 / DSM 20229 / NCIMB 8711 / NCTC 7292 / S-41).